The primary structure comprises 455 residues: Glutamate--tRNA ligase (455 aa).

A 'HIGH' region motif is present at residues 8 to 18 (PSPTGYLHIGG). The 'KMSKS' region signature appears at 231–235 (RLSKR). Residue K234 participates in ATP binding.

Belongs to the class-I aminoacyl-tRNA synthetase family. Glutamate--tRNA ligase type 1 subfamily. Monomer.

The protein localises to the cytoplasm. The catalysed reaction is tRNA(Glu) + L-glutamate + ATP = L-glutamyl-tRNA(Glu) + AMP + diphosphate. Its function is as follows. Catalyzes the attachment of glutamate to tRNA(Glu) in a two-step reaction: glutamate is first activated by ATP to form Glu-AMP and then transferred to the acceptor end of tRNA(Glu). The chain is Glutamate--tRNA ligase from Vesicomyosocius okutanii subsp. Calyptogena okutanii (strain HA).